The primary structure comprises 293 residues: Acetylglutamate kinase (293 aa).

Substrate is bound by residues 70–71 (GG), arginine 92, and asparagine 186.

The protein belongs to the acetylglutamate kinase family. ArgB subfamily.

It localises to the cytoplasm. The catalysed reaction is N-acetyl-L-glutamate + ATP = N-acetyl-L-glutamyl 5-phosphate + ADP. The protein operates within amino-acid biosynthesis; L-arginine biosynthesis; N(2)-acetyl-L-ornithine from L-glutamate: step 2/4. In terms of biological role, catalyzes the ATP-dependent phosphorylation of N-acetyl-L-glutamate. In Synechococcus sp. (strain CC9605), this protein is Acetylglutamate kinase.